A 122-amino-acid chain; its full sequence is Urease subunit beta (122 aa).

The disordered stretch occupies residues 92-122 (GLRPEYAGELDGRGHEPTAPNYGEKGQGHFE).

This sequence belongs to the urease beta subunit family. As to quaternary structure, heterotrimer of UreA (gamma), UreB (beta) and UreC (alpha) subunits. Three heterotrimers associate to form the active enzyme.

It is found in the cytoplasm. It catalyses the reaction urea + 2 H2O + H(+) = hydrogencarbonate + 2 NH4(+). The protein operates within nitrogen metabolism; urea degradation; CO(2) and NH(3) from urea (urease route): step 1/1. The sequence is that of Urease subunit beta from Saccharopolyspora erythraea (strain ATCC 11635 / DSM 40517 / JCM 4748 / NBRC 13426 / NCIMB 8594 / NRRL 2338).